The following is a 555-amino-acid chain: Beta-caryophyllene synthase (555 aa).

The Mg(2+) site is built by Asp-313, Asp-317, Asp-456, and Glu-464. Positions 313 to 317 (DDIYD) match the DDXXD motif motif.

This sequence belongs to the terpene synthase family. The cofactor is Mg(2+).

The catalysed reaction is (2E,6E)-farnesyl diphosphate = (+)-(E)-beta-caryophyllene + diphosphate. The protein operates within secondary metabolite biosynthesis; terpenoid biosynthesis. Functionally, sesquiterpene synthase converting farnesyl diphosphate to beta-caryophyllene as the major product. The sequence is that of Beta-caryophyllene synthase from Phyla dulcis (Aztec sweet herb).